Reading from the N-terminus, the 736-residue chain is Elongation factor 2 (736 aa).

Residues 18 to 234 (TRVRNIGIIA…VIDAYTASDK (217 aa)) enclose the tr-type G domain. Residues 27–34 (AHVDHGKT), 93–97 (DTPGH), and 147–150 (NKVD) each bind GTP. H603 is subject to Diphthamide.

It belongs to the TRAFAC class translation factor GTPase superfamily. Classic translation factor GTPase family. EF-G/EF-2 subfamily.

The protein resides in the cytoplasm. In terms of biological role, catalyzes the GTP-dependent ribosomal translocation step during translation elongation. During this step, the ribosome changes from the pre-translocational (PRE) to the post-translocational (POST) state as the newly formed A-site-bound peptidyl-tRNA and P-site-bound deacylated tRNA move to the P and E sites, respectively. Catalyzes the coordinated movement of the two tRNA molecules, the mRNA and conformational changes in the ribosome. In Saccharolobus islandicus (strain Y.N.15.51 / Yellowstone #2) (Sulfolobus islandicus), this protein is Elongation factor 2.